A 1237-amino-acid polypeptide reads, in one-letter code: Anion exchange protein 2 (1237 aa).

The tract at residues Met-1–Ile-237 is disordered. The Cytoplasmic portion of the chain corresponds to Met-1 to Cys-704. 2 stretches are compositionally biased toward basic and acidic residues: residues Glu-37–Glu-49 and Gly-58–Arg-75. Composition is skewed to basic residues over residues Gln-76 to Leu-85 and Arg-94 to Pro-110. Residues Ser-113, Ser-132, Ser-144, Ser-170, and Ser-172 each carry the phosphoserine modification. The segment covering Thr-120–Glu-133 has biased composition (acidic residues). The segment covering Ala-137–Ser-151 has biased composition (low complexity). The segment covering Gly-205–Ser-215 has biased composition (gly residues). Residue Ser-239 is modified to Phosphoserine. Position 253 is a phosphothreonine (Thr-253). Lys-270 carries the N6-methyllysine modification. Positions Arg-286–Pro-316 are disordered. Position 439 is a phosphoserine (Ser-439). A disordered region spans residues Ser-445–Ile-466. The interval Cys-704–Val-1237 is membrane (anion exchange). The next 4 helical transmembrane spans lie at Leu-705–Leu-725, Phe-750–Phe-770, Ile-792–Val-812, and Ile-822–Ile-842. The Extracellular portion of the chain corresponds to Phe-843–Gln-893. N-linked (GlcNAc...) asparagine glycosylation is found at Asn-855, Asn-864, and Asn-878. A helical membrane pass occupies residues Pro-894–Leu-914. Over Arg-915–Arg-929 the chain is Cytoplasmic. The next 5 membrane-spanning stretches (helical) occupy residues Val-930–Ile-950, Phe-985–Phe-1005, Leu-1032–Ala-1052, Arg-1086–Leu-1106, and Ile-1109–Ile-1129. Cys-1169 carries S-palmitoyl cysteine lipidation. The chain crosses the membrane as a helical span at residues Leu-1170–Ile-1190.

The protein belongs to the anion exchanger (TC 2.A.31) family.

Its subcellular location is the apical cell membrane. The protein resides in the basolateral cell membrane. The catalysed reaction is hydrogencarbonate(in) + chloride(out) = hydrogencarbonate(out) + chloride(in). Its function is as follows. Sodium-independent anion exchanger which mediates the electroneutral exchange of chloride for bicarbonate ions across the cell membrane. Plays an important role in osteoclast differentiation and function. Regulates bone resorption and calpain-dependent actin cytoskeleton organization in osteoclasts via anion exchange-dependent control of pH. Essential for intracellular pH regulation in CD8(+) T-cells upon CD3 stimulation, modulating CD8(+) T-cell response. In Equus caballus (Horse), this protein is Anion exchange protein 2 (SLC4A2).